We begin with the raw amino-acid sequence, 173 residues long: Telomerase RNA component interacting RNase (173 aa).

Basic and acidic residues predominate over residues Met1–Gly12. A disordered region spans residues Met1–Gly119. Low complexity-rich tracts occupy residues Glu14–Arg23 and Ser43–Val52. The span at Leu64 to Glu79 shows a compositional bias: basic and acidic residues. Residues Pro80 to Pro90 are compositionally biased toward pro residues. The residue at position 143 (Lys143) is an N6-acetyllysine.

In terms of assembly, part of the telomerase RNA 3' end complex which contains about 488 proteins.

Exoribonuclease that is part of the telomerase RNA 3' end processing complex and which has the ability to cleave all four unpaired RNA nucleotides from the 5' end or 3' end with higher efficiency for purine bases. The chain is Telomerase RNA component interacting RNase from Mus musculus (Mouse).